Consider the following 521-residue polypeptide: uncharacterized protein (521 aa).

A signal peptide spans 1–22 (MGFKLKGFGFLTLFASQAFLTA). Cys23 carries the N-palmitoyl cysteine lipid modification. A lipid anchor (S-diacylglycerol cysteine) is attached at Cys23.

It belongs to the MG067/MG068/MG395 family.

It is found in the cell membrane. This is an uncharacterized protein from Mycoplasma pneumoniae (strain ATCC 29342 / M129 / Subtype 1) (Mycoplasmoides pneumoniae).